We begin with the raw amino-acid sequence, 358 residues long: Starch-binding domain-containing protein 1 (358 aa).

The Extracellular segment spans residues 1–6; that stretch reads MGAVWS. The chain crosses the membrane as a helical span at residues 7 to 23; sequence ALLVGGGLAGALFVWLL. The Cytoplasmic segment spans residues 24 to 358; sequence RGGPGDTGKD…KVVHAWWGIH (335 aa). Basic and acidic residues predominate over residues 30–42; the sequence is TGKDGDAEQEKDA. 2 disordered regions span residues 30-70 and 104-151; these read TGKD…QELV and SREV…SPMG. Low complexity predominate over residues 50–66; that stretch reads PGGHQSGSSGLSPGPSG. The residue at position 65 (S65) is a Phosphoserine. Basic and acidic residues predominate over residues 106–115; the sequence is EVCDNSREHV. Phosphoserine is present on S117. Over residues 126-140 the composition is skewed to polar residues; sequence PATSETSNSRSYSEV. Phosphoserine is present on residues S148, S175, S188, and S194. Residues 200–206 carry the LIR motif; the sequence is HEEWEMV. A phosphoserine mark is found at S210, S211, and S220. The CBM20 domain maps to 258–357; it reads PAGSQQVSVR…DKVVHAWWGI (100 aa).

Interacts with the ATG8 family proteins GABARAP and GABARAPL1. Interacts with several glycogen-associated proteins, such as GYS2 (liver glycogen synthase), GDE (glycogen debranching enzyme), GBE1 (glycogen branching enzyme 1) and EPM2A (Laforin). Post-translationally, ubiquitinated, which leads to proteasomal degradation. As to expression, expressed at high level in skeletal and cardiac muscles. Moderately expressed in liver and placenta. No expression is found in pancreas, kidney or lung. Present in skeletal muscle, heart and placenta (at protein level).

Its subcellular location is the preautophagosomal structure membrane. It is found in the endoplasmic reticulum membrane. The protein localises to the cell membrane. The protein resides in the sarcolemma. It localises to the T-tubule. Its function is as follows. Acts as a cargo receptor for glycogen. Delivers its cargo to an autophagic pathway called glycophagy, resulting in the transport of glycogen to lysosomes. The protein is Starch-binding domain-containing protein 1 of Homo sapiens (Human).